Reading from the N-terminus, the 293-residue chain is Acetyl-coenzyme A carboxylase carboxyl transferase subunit beta (293 aa).

A CoA carboxyltransferase N-terminal domain is found at L29–K293. Zn(2+) contacts are provided by C33, C36, C52, and C55. The C4-type zinc finger occupies C33–C55.

It belongs to the AccD/PCCB family. As to quaternary structure, acetyl-CoA carboxylase is a heterohexamer composed of biotin carboxyl carrier protein (AccB), biotin carboxylase (AccC) and two subunits each of ACCase subunit alpha (AccA) and ACCase subunit beta (AccD). The cofactor is Zn(2+).

The protein resides in the cytoplasm. It catalyses the reaction N(6)-carboxybiotinyl-L-lysyl-[protein] + acetyl-CoA = N(6)-biotinyl-L-lysyl-[protein] + malonyl-CoA. It participates in lipid metabolism; malonyl-CoA biosynthesis; malonyl-CoA from acetyl-CoA: step 1/1. Its function is as follows. Component of the acetyl coenzyme A carboxylase (ACC) complex. Biotin carboxylase (BC) catalyzes the carboxylation of biotin on its carrier protein (BCCP) and then the CO(2) group is transferred by the transcarboxylase to acetyl-CoA to form malonyl-CoA. In Prochlorococcus marinus (strain MIT 9303), this protein is Acetyl-coenzyme A carboxylase carboxyl transferase subunit beta.